Here is a 190-residue protein sequence, read N- to C-terminus: Major intrinsically disordered NOTCH2-binding receptor 1-like (190 aa).

Position 79 is a phosphoserine (Ser79). N-linked (GlcNAc...) asparagine glycosylation is found at Asn109 and Asn125. Residues 169–189 (GLILLVVISILVTIVTIITFF) traverse the membrane as a helical segment.

Belongs to the MINAR family. In terms of assembly, interacts with NOTCH2. Highly expressed in the auditory hair cells.

The protein resides in the lysosome membrane. The protein localises to the endoplasmic reticulum membrane. Functionally, binds cholesterol and may regulate the distribution and homeostasis of cholesterol in hair cells. May play a role in angiogenesis. The polypeptide is Major intrinsically disordered NOTCH2-binding receptor 1-like (Homo sapiens (Human)).